The primary structure comprises 302 residues: Methionyl-tRNA formyltransferase (302 aa).

106 to 109 (SVLP) lines the (6S)-5,6,7,8-tetrahydrofolate pocket.

It belongs to the Fmt family.

It catalyses the reaction L-methionyl-tRNA(fMet) + (6R)-10-formyltetrahydrofolate = N-formyl-L-methionyl-tRNA(fMet) + (6S)-5,6,7,8-tetrahydrofolate + H(+). Its function is as follows. Attaches a formyl group to the free amino group of methionyl-tRNA(fMet). The formyl group appears to play a dual role in the initiator identity of N-formylmethionyl-tRNA by promoting its recognition by IF2 and preventing the misappropriation of this tRNA by the elongation apparatus. This chain is Methionyl-tRNA formyltransferase, found in Hydrogenobaculum sp. (strain Y04AAS1).